A 57-amino-acid chain; its full sequence is Large ribosomal subunit protein bL32 (57 aa).

The tract at residues 1 to 38 (MAVQQNKPTRSKRGMRRSHDALTAVTSLSVDKTSGEKH) is disordered.

Belongs to the bacterial ribosomal protein bL32 family.

This is Large ribosomal subunit protein bL32 from Escherichia coli O7:K1 (strain IAI39 / ExPEC).